The following is a 155-amino-acid chain: Interleukin-2 (155 aa).

The first 20 residues, 1–20 (MYSRQLASCVALALVLLANS), serve as a signal peptide directing secretion. Thr-23 is a glycosylation site (O-linked (GalNAc...) threonine). Residues Cys-78 and Cys-126 are joined by a disulfide bond.

It belongs to the IL-2 family.

The protein resides in the secreted. Cytokine produced by activated CD4-positive helper T-cells and to a lesser extend activated CD8-positive T-cells and natural killer (NK) cells that plays pivotal roles in the immune response and tolerance. Binds to a receptor complex composed of either the high-affinity trimeric IL-2R (IL2RA/CD25, IL2RB/CD122 and IL2RG/CD132) or the low-affinity dimeric IL-2R (IL2RB and IL2RG). Interaction with the receptor leads to oligomerization and conformation changes in the IL-2R subunits resulting in downstream signaling starting with phosphorylation of JAK1 and JAK3. In turn, JAK1 and JAK3 phosphorylate the receptor to form a docking site leading to the phosphorylation of several substrates including STAT5. This process leads to activation of several pathways including STAT, phosphoinositide-3-kinase/PI3K and mitogen-activated protein kinase/MAPK pathways. Functions as a T-cell growth factor and can increase NK-cell cytolytic activity as well. Promotes strong proliferation of activated B-cells and subsequently immunoglobulin production. Plays a pivotal role in regulating the adaptive immune system by controlling the survival and proliferation of regulatory T-cells, which are required for the maintenance of immune tolerance. Moreover, participates in the differentiation and homeostasis of effector T-cell subsets, including Th1, Th2, Th17 as well as memory CD8-positive T-cells. This Meriones unguiculatus (Mongolian jird) protein is Interleukin-2 (IL2).